The following is a 281-amino-acid chain: Microtubule-associated protein RP/EB family member 3 (281 aa).

The region spanning 14–116 (NLSRHDMLAW…FIQWFKKFFD (103 aa)) is the Calponin-homology (CH) domain. A disordered region spans residues 157–181 (VPQRTSPTGPKNMQTSGRLSNVAPP). The segment covering 158-175 (PQRTSPTGPKNMQTSGRL) has biased composition (polar residues). S162 and S176 each carry phosphoserine. Residues 194-264 (GGHETDAQIL…LYATEEGFAP (71 aa)) enclose the EB1 C-terminal domain. The tract at residues 217–260 (DGLEKERDFYFSKLRDIELICQEHESENSPVISGIIGILYATEE) is APC-binding. A DCTN1-binding region spans residues 217–281 (DGLEKERDFY…EHQQEDQDEY (65 aa)). The interval 261 to 281 (GFAPPEDDEIEEHQQEDQDEY) is disordered. Basic and acidic residues predominate over residues 272-281 (EHQQEDQDEY).

It belongs to the MAPRE family. As to quaternary structure, homodimer. Heterodimer with MAPRE1. Binds monomeric and polymerized GTP-bound tubulin. Interacts with APC2. Interacts with DCTN1 and SRCIN1. Binds to the C-terminal domain of APC. Interacts (via C-terminus) with CLIP1. Interacts with SLAIN2 and SLAIN1. Interacts with AKAP9. Interacts with PDE4DIP. Interacts with PDE4DIP isoform 13/MMG8/SMYLE; this interaction is required for its recruitment to the Golgi apparatus. As to expression, predominantly expressed in brain and muscle.

The protein resides in the cytoplasm. It localises to the cytoskeleton. Its function is as follows. Plus-end tracking protein (+TIP) that binds to the plus-end of microtubules and regulates the dynamics of the microtubule cytoskeleton. Promotes microtubule growth. May be involved in spindle function by stabilizing microtubules and anchoring them at centrosomes. Also acts as a regulator of minus-end microtubule organization: interacts with the complex formed by AKAP9 and PDE4DIP, leading to recruit CAMSAP2 to the Golgi apparatus, thereby tethering non-centrosomal minus-end microtubules to the Golgi, an important step for polarized cell movement. Promotes elongation of CAMSAP2-decorated microtubule stretches on the minus-end of microtubules. This Homo sapiens (Human) protein is Microtubule-associated protein RP/EB family member 3 (MAPRE3).